A 313-amino-acid chain; its full sequence is Glyoxylate/hydroxypyruvate reductase A (313 aa).

Residue R228 is part of the active site. The active-site Proton donor is the H276.

This sequence belongs to the D-isomer specific 2-hydroxyacid dehydrogenase family. GhrA subfamily.

It localises to the cytoplasm. It carries out the reaction glycolate + NADP(+) = glyoxylate + NADPH + H(+). The enzyme catalyses (R)-glycerate + NAD(+) = 3-hydroxypyruvate + NADH + H(+). The catalysed reaction is (R)-glycerate + NADP(+) = 3-hydroxypyruvate + NADPH + H(+). Catalyzes the NADPH-dependent reduction of glyoxylate and hydroxypyruvate into glycolate and glycerate, respectively. The protein is Glyoxylate/hydroxypyruvate reductase A of Photorhabdus laumondii subsp. laumondii (strain DSM 15139 / CIP 105565 / TT01) (Photorhabdus luminescens subsp. laumondii).